The chain runs to 427 residues: Enolase (427 aa).

Residue glutamine 162 coordinates (2R)-2-phosphoglycerate. The active-site Proton donor is glutamate 204. Mg(2+) contacts are provided by aspartate 241, glutamate 283, and aspartate 310. 4 residues coordinate (2R)-2-phosphoglycerate: lysine 335, arginine 364, serine 365, and lysine 386. Lysine 335 (proton acceptor) is an active-site residue.

It belongs to the enolase family. It depends on Mg(2+) as a cofactor.

The protein resides in the cytoplasm. Its subcellular location is the secreted. It is found in the cell surface. It carries out the reaction (2R)-2-phosphoglycerate = phosphoenolpyruvate + H2O. Its pathway is carbohydrate degradation; glycolysis; pyruvate from D-glyceraldehyde 3-phosphate: step 4/5. Functionally, catalyzes the reversible conversion of 2-phosphoglycerate (2-PG) into phosphoenolpyruvate (PEP). It is essential for the degradation of carbohydrates via glycolysis. This is Enolase from Mycolicibacterium smegmatis (strain ATCC 700084 / mc(2)155) (Mycobacterium smegmatis).